Consider the following 363-residue polypeptide: MPAYNIVVFAGDHWGPEVTAEAIKVLRVIEKSRDDITLNLQDHLLGGASIDATANPLTDEALAAAKNADAVLLGAIGGPKWGTGAVRPEQGLLNVRKEMGTFGNLRPCNFAAPSLVEHSPLKASVCEGVDFNIIRELTGGIYFGDRKKMTAAATMDTEPYSRAEIERITPRAHLALQHNPPLPVWSLDKANVLATSRLWRKTVTEIMAKEFPQLKIEHQLIDSAAMIMVKNPRQLNGIIVTSNLFGDIISDEASVIPGSLGLLPSASLSGIPDGKGRVNGIYEPIHGSAPDIAGKGIVNPVAAILSVAMMMQYSFGRFDEARAIEAAVRNVLESGVRTGDIGGKATTSEVGDAVAAELEKLLK.

78–89 serves as a coordination point for NAD(+); sequence GPKWGTGAVRPE. 4 residues coordinate substrate: arginine 96, arginine 106, arginine 135, and aspartate 222. Residues aspartate 222, aspartate 247, and aspartate 251 each coordinate Mg(2+). 287 to 299 is an NAD(+) binding site; sequence GSAPDIAGKGIVN.

It belongs to the isocitrate and isopropylmalate dehydrogenases family. In terms of assembly, homodimer. It depends on Mg(2+) as a cofactor. Mn(2+) is required as a cofactor.

The protein localises to the cytoplasm. It catalyses the reaction (2R,3S)-3-isopropylmalate + NAD(+) = 4-methyl-2-oxopentanoate + CO2 + NADH. Its pathway is amino-acid biosynthesis; L-leucine biosynthesis; L-leucine from 3-methyl-2-oxobutanoate: step 3/4. Catalyzes the oxidation of 3-carboxy-2-hydroxy-4-methylpentanoate (3-isopropylmalate) to 3-carboxy-4-methyl-2-oxopentanoate. The product decarboxylates to 4-methyl-2 oxopentanoate. The chain is 3-isopropylmalate dehydrogenase A (leu2A) from Aspergillus niger.